We begin with the raw amino-acid sequence, 354 residues long: UDP-3-O-acylglucosamine N-acyltransferase (354 aa).

His247 acts as the Proton acceptor in catalysis.

The protein belongs to the transferase hexapeptide repeat family. LpxD subfamily. Homotrimer.

It catalyses the reaction a UDP-3-O-[(3R)-3-hydroxyacyl]-alpha-D-glucosamine + a (3R)-hydroxyacyl-[ACP] = a UDP-2-N,3-O-bis[(3R)-3-hydroxyacyl]-alpha-D-glucosamine + holo-[ACP] + H(+). It functions in the pathway bacterial outer membrane biogenesis; LPS lipid A biosynthesis. Catalyzes the N-acylation of UDP-3-O-acylglucosamine using 3-hydroxyacyl-ACP as the acyl donor. Is involved in the biosynthesis of lipid A, a phosphorylated glycolipid that anchors the lipopolysaccharide to the outer membrane of the cell. This is UDP-3-O-acylglucosamine N-acyltransferase from Chlamydia trachomatis serovar L2b (strain UCH-1/proctitis).